Reading from the N-terminus, the 157-residue chain is uncharacterized protein (157 aa).

Transmembrane regions (helical) follow at residues 3–23 (IFSFFSADFWQANSLCFMFIS), 24–44 (AFLSATVLPGNSEVIFVALAV), 47–67 (LMLGSLFNVDILALILIATAG), and 105–125 (IALLLSWLPVVGDLFCAIAGW).

To E.coli YqaA.

It localises to the cell membrane. This is an uncharacterized protein from Haemophilus influenzae (strain ATCC 51907 / DSM 11121 / KW20 / Rd).